The primary structure comprises 720 residues: Beta-glucan synthesis-associated protein KRE6 (720 aa).

Composition is skewed to polar residues over residues 1 to 17 (MPLRNLTETHNFSSTNL), 31 to 51 (LSSSPSFGQQNDNSTNDNAGL), and 69 to 90 (SLSSSVHYQPQGSDSSLLHDNS). The tract at residues 1 to 90 (MPLRNLTETH…SDSSLLHDNS (90 aa)) is disordered. The Cytoplasmic segment spans residues 1–252 (MPLRNLTETH…KYMDKRSASG (252 aa)). 6 positions are modified to phosphoserine: serine 81, serine 116, serine 133, serine 134, serine 136, and serine 139. 2 disordered regions span residues 117–142 (TANDNSFLQPPHRAIASSPSLNSNLS) and 167–189 (QLNHHGRSPTSSPGNESSASFSS). Over residues 133 to 142 (SSPSLNSNLS) the composition is skewed to low complexity. Residues 253 to 273 (LAGVLLLFLAAIFIFIVLPAL) traverse the membrane as a helical; Signal-anchor for type II membrane protein segment. Residues 274 to 720 (TFTGAIDHES…CTSSKFKLSS (447 aa)) lie on the Lumenal side of the membrane. One can recognise a GH16 domain in the interval 289 to 664 (TYLTQYQYPQ…YVRIYQPSNA (376 aa)). N-linked (GlcNAc...) asparagine glycans are attached at residues asparagine 374, asparagine 461, asparagine 538, asparagine 563, and asparagine 691.

It belongs to the SKN1/KRE6 family. The cytoplasmic domain interacts with the actin patch assembly proteins LAS17 and SLA1. Interacts with KEG1.

It is found in the golgi apparatus membrane. Functionally, involved in the synthesis of (1-&gt;6)- and (1-&gt;3)-beta-D-glucan polymers of the yeast cell wall in vivo. It is required for full activity of beta-glucan synthase in vitro. May be involved in the maturation and transport of cell wall proteins (CWP) to the cell wall. May act as a transglucosidase and contribute to the construction of a protein-bound glucan-structure that acts as an acceptor site for the addition of (1-&gt;6)-beta-D-glucan at the cell surface. The protein is Beta-glucan synthesis-associated protein KRE6 (KRE6) of Saccharomyces cerevisiae (strain ATCC 204508 / S288c) (Baker's yeast).